A 386-amino-acid chain; its full sequence is Succinate--CoA ligase [ADP-forming] subunit beta (386 aa).

The ATP-grasp domain occupies 9 to 244; sequence KEVLRKYGVA…LDEEDPKEIE (236 aa). ATP is bound by residues Lys46, 53-55, Glu99, Cys102, and Glu107; that span reads GRG. Asn199 and Asp213 together coordinate Mg(2+). Substrate contacts are provided by residues Asn264 and 321-323; that span reads GIM.

Belongs to the succinate/malate CoA ligase beta subunit family. Heterotetramer of two alpha and two beta subunits. Mg(2+) serves as cofactor.

It catalyses the reaction succinate + ATP + CoA = succinyl-CoA + ADP + phosphate. The catalysed reaction is GTP + succinate + CoA = succinyl-CoA + GDP + phosphate. The protein operates within carbohydrate metabolism; tricarboxylic acid cycle; succinate from succinyl-CoA (ligase route): step 1/1. Its function is as follows. Succinyl-CoA synthetase functions in the citric acid cycle (TCA), coupling the hydrolysis of succinyl-CoA to the synthesis of either ATP or GTP and thus represents the only step of substrate-level phosphorylation in the TCA. The beta subunit provides nucleotide specificity of the enzyme and binds the substrate succinate, while the binding sites for coenzyme A and phosphate are found in the alpha subunit. The chain is Succinate--CoA ligase [ADP-forming] subunit beta from Bacillus licheniformis (strain ATCC 14580 / DSM 13 / JCM 2505 / CCUG 7422 / NBRC 12200 / NCIMB 9375 / NCTC 10341 / NRRL NRS-1264 / Gibson 46).